We begin with the raw amino-acid sequence, 215 residues long: Histidine biosynthesis bifunctional protein HisIE (215 aa).

The interval 1–118 is phosphoribosyl-AMP cyclohydrolase; that stretch reads MTKSISIEHL…YKNDVALLQI (118 aa). A phosphoribosyl-ATP pyrophosphohydrolase region spans residues 119 to 215; it reads IPQVSAKIKE…HVEKEGQQRE (97 aa).

It in the N-terminal section; belongs to the PRA-CH family. The protein in the C-terminal section; belongs to the PRA-PH family.

Its subcellular location is the cytoplasm. The catalysed reaction is 1-(5-phospho-beta-D-ribosyl)-ATP + H2O = 1-(5-phospho-beta-D-ribosyl)-5'-AMP + diphosphate + H(+). The enzyme catalyses 1-(5-phospho-beta-D-ribosyl)-5'-AMP + H2O = 1-(5-phospho-beta-D-ribosyl)-5-[(5-phospho-beta-D-ribosylamino)methylideneamino]imidazole-4-carboxamide. Its pathway is amino-acid biosynthesis; L-histidine biosynthesis; L-histidine from 5-phospho-alpha-D-ribose 1-diphosphate: step 2/9. The protein operates within amino-acid biosynthesis; L-histidine biosynthesis; L-histidine from 5-phospho-alpha-D-ribose 1-diphosphate: step 3/9. This Oceanobacillus iheyensis (strain DSM 14371 / CIP 107618 / JCM 11309 / KCTC 3954 / HTE831) protein is Histidine biosynthesis bifunctional protein HisIE.